Consider the following 583-residue polypeptide: uncharacterized protein (583 aa).

24–140 (ILADIDDEQL…SAMLRAMARM (117 aa)) is an a nucleoside 3',5'-cyclic phosphate binding site. Positions 309-469 (LVMAGGGARG…LNNLPANVMC (161 aa)) constitute a PNPLA domain. The short motif at 313 to 318 (GGGARG) is the GXGXXG element. Positions 340–344 (GTSSG) match the GXSXG motif. The active-site Nucleophile is the Ser342. Asp456 functions as the Proton acceptor in the catalytic mechanism. A DGA/G motif is present at residues 456–458 (DGG).

Belongs to the NTE family.

This is an uncharacterized protein from Mycobacterium bovis (strain ATCC BAA-935 / AF2122/97).